We begin with the raw amino-acid sequence, 192 residues long: Ion-translocating oxidoreductase complex subunit B (192 aa).

The tract at residues 1-26 (MNAFWIAVAAVSLLGLAFGAILGYAS) is hydrophobic. One can recognise a 4Fe-4S domain in the interval 32–91 (EDDPVVEKIDEILPQSQCGQCGYPGCRPYAEAISCNGEKINRCAPGGEAVMLKIAELLNV). 12 residues coordinate [4Fe-4S] cluster: Cys49, Cys52, Cys57, Cys74, Cys117, Cys120, Cys123, Cys127, Cys147, Cys150, Cys153, and Cys157. 4Fe-4S ferredoxin-type domains follow at residues 108-137 (MVAV…GATR) and 138-167 (AMHT…LQPV).

Belongs to the 4Fe4S bacterial-type ferredoxin family. RnfB subfamily. In terms of assembly, the complex is composed of six subunits: RsxA, RsxB, RsxC, RsxD, RsxE and RsxG. [4Fe-4S] cluster serves as cofactor.

The protein resides in the cell inner membrane. Its function is as follows. Part of a membrane-bound complex that couples electron transfer with translocation of ions across the membrane. Required to maintain the reduced state of SoxR. This chain is Ion-translocating oxidoreductase complex subunit B, found in Escherichia coli O6:H1 (strain CFT073 / ATCC 700928 / UPEC).